The sequence spans 257 residues: Thiazole synthase (257 aa).

K96 acts as the Schiff-base intermediate with DXP in catalysis. Residues G157, 184–185 (AG), and 206–207 (NT) contribute to the 1-deoxy-D-xylulose 5-phosphate site.

Belongs to the ThiG family. Homotetramer. Forms heterodimers with either ThiH or ThiS.

The protein resides in the cytoplasm. The catalysed reaction is [ThiS sulfur-carrier protein]-C-terminal-Gly-aminoethanethioate + 2-iminoacetate + 1-deoxy-D-xylulose 5-phosphate = [ThiS sulfur-carrier protein]-C-terminal Gly-Gly + 2-[(2R,5Z)-2-carboxy-4-methylthiazol-5(2H)-ylidene]ethyl phosphate + 2 H2O + H(+). The protein operates within cofactor biosynthesis; thiamine diphosphate biosynthesis. Its function is as follows. Catalyzes the rearrangement of 1-deoxy-D-xylulose 5-phosphate (DXP) to produce the thiazole phosphate moiety of thiamine. Sulfur is provided by the thiocarboxylate moiety of the carrier protein ThiS. In vitro, sulfur can be provided by H(2)S. The polypeptide is Thiazole synthase (Bartonella bacilliformis (strain ATCC 35685 / KC583 / Herrer 020/F12,63)).